Reading from the N-terminus, the 241-residue chain is Leucyl/phenylalanyl-tRNA--protein transferase (241 aa).

The protein belongs to the L/F-transferase family.

It localises to the cytoplasm. The catalysed reaction is N-terminal L-lysyl-[protein] + L-leucyl-tRNA(Leu) = N-terminal L-leucyl-L-lysyl-[protein] + tRNA(Leu) + H(+). It catalyses the reaction N-terminal L-arginyl-[protein] + L-leucyl-tRNA(Leu) = N-terminal L-leucyl-L-arginyl-[protein] + tRNA(Leu) + H(+). It carries out the reaction L-phenylalanyl-tRNA(Phe) + an N-terminal L-alpha-aminoacyl-[protein] = an N-terminal L-phenylalanyl-L-alpha-aminoacyl-[protein] + tRNA(Phe). Functions in the N-end rule pathway of protein degradation where it conjugates Leu, Phe and, less efficiently, Met from aminoacyl-tRNAs to the N-termini of proteins containing an N-terminal arginine or lysine. This chain is Leucyl/phenylalanyl-tRNA--protein transferase, found in Colwellia psychrerythraea (strain 34H / ATCC BAA-681) (Vibrio psychroerythus).